The sequence spans 427 residues: Trigger factor (427 aa).

One can recognise a PPIase FKBP-type domain in the interval 163–248 (GDTVVIDFVG…VNEVKAKELP (86 aa)).

It belongs to the FKBP-type PPIase family. Tig subfamily.

The protein resides in the cytoplasm. The enzyme catalyses [protein]-peptidylproline (omega=180) = [protein]-peptidylproline (omega=0). Functionally, involved in protein export. Acts as a chaperone by maintaining the newly synthesized protein in an open conformation. Functions as a peptidyl-prolyl cis-trans isomerase. This chain is Trigger factor (tig), found in Lactococcus lactis subsp. lactis (strain IL1403) (Streptococcus lactis).